Reading from the N-terminus, the 87-residue chain is VDVLMPNVGEITGGSMRIDDMNELMAGFKREGIDTDAYYWFIDQRKYGTCPHGGYGIGTERILAWLCDRFTVRDCSLYPRFSGRCKP.

This sequence belongs to the class-II aminoacyl-tRNA synthetase family.

Its subcellular location is the cytoplasm. It catalyses the reaction tRNA(Asn) + L-asparagine + ATP = L-asparaginyl-tRNA(Asn) + AMP + diphosphate + H(+). This is Asparagine--tRNA ligase, cytoplasmic (DED81) from Saccharomyces paradoxus (Yeast).